We begin with the raw amino-acid sequence, 143 residues long: Small ribosomal subunit protein uS9 (143 aa).

Positions 118 to 143 (DSRRTEPHKPNRSTKGPRAKRQKSYR) are disordered. Residues 127 to 143 (PNRSTKGPRAKRQKSYR) are compositionally biased toward basic residues.

The protein belongs to the universal ribosomal protein uS9 family.

The chain is Small ribosomal subunit protein uS9 from Thermococcus sibiricus (strain DSM 12597 / MM 739).